Reading from the N-terminus, the 256-residue chain is Pyridoxine 5'-phosphate synthase (256 aa).

Residue Asn-10 coordinates 3-amino-2-oxopropyl phosphate. Residue 12–13 coordinates 1-deoxy-D-xylulose 5-phosphate; that stretch reads DH. Residue Arg-21 coordinates 3-amino-2-oxopropyl phosphate. His-46 acts as the Proton acceptor in catalysis. 2 residues coordinate 1-deoxy-D-xylulose 5-phosphate: Arg-48 and His-53. Glu-73 functions as the Proton acceptor in the catalytic mechanism. Thr-103 provides a ligand contact to 1-deoxy-D-xylulose 5-phosphate. His-193 acts as the Proton donor in catalysis. Residues Gly-194 and 215–216 contribute to the 3-amino-2-oxopropyl phosphate site; that span reads GH.

This sequence belongs to the PNP synthase family. In terms of assembly, homooctamer; tetramer of dimers.

The protein localises to the cytoplasm. The enzyme catalyses 3-amino-2-oxopropyl phosphate + 1-deoxy-D-xylulose 5-phosphate = pyridoxine 5'-phosphate + phosphate + 2 H2O + H(+). It functions in the pathway cofactor biosynthesis; pyridoxine 5'-phosphate biosynthesis; pyridoxine 5'-phosphate from D-erythrose 4-phosphate: step 5/5. Catalyzes the complicated ring closure reaction between the two acyclic compounds 1-deoxy-D-xylulose-5-phosphate (DXP) and 3-amino-2-oxopropyl phosphate (1-amino-acetone-3-phosphate or AAP) to form pyridoxine 5'-phosphate (PNP) and inorganic phosphate. The chain is Pyridoxine 5'-phosphate synthase from Zymomonas mobilis subsp. mobilis (strain ATCC 31821 / ZM4 / CP4).